Reading from the N-terminus, the 137-residue chain is Large ribosomal subunit protein uL16 (137 aa).

This sequence belongs to the universal ribosomal protein uL16 family. Part of the 50S ribosomal subunit.

Binds 23S rRNA and is also seen to make contacts with the A and possibly P site tRNAs. In Xanthobacter autotrophicus (strain ATCC BAA-1158 / Py2), this protein is Large ribosomal subunit protein uL16.